A 421-amino-acid chain; its full sequence is Gamma-glutamyl phosphate reductase (421 aa).

It belongs to the gamma-glutamyl phosphate reductase family.

It localises to the cytoplasm. The enzyme catalyses L-glutamate 5-semialdehyde + phosphate + NADP(+) = L-glutamyl 5-phosphate + NADPH + H(+). The protein operates within amino-acid biosynthesis; L-proline biosynthesis; L-glutamate 5-semialdehyde from L-glutamate: step 2/2. In terms of biological role, catalyzes the NADPH-dependent reduction of L-glutamate 5-phosphate into L-glutamate 5-semialdehyde and phosphate. The product spontaneously undergoes cyclization to form 1-pyrroline-5-carboxylate. In Pseudomonas aeruginosa (strain LESB58), this protein is Gamma-glutamyl phosphate reductase.